A 264-amino-acid chain; its full sequence is MKAVVLTVAVLFLTGSQARHFWQQDEPQSSWDRIKDFATVYLDAVKDSGRDYVTQFETSALGKQLNLKLLDNWDSLSSTVSKVREQIGPVSQDFWDKLEKDTVSLRQEMNKDLEEVKRKVQPYLDEFQKRWQEDVERYRQQVEPLSKELREGARQKLLELHEKLSPLGQEMRDRARTHVDALRTHLAPYSDELRQRLAARLEALKEGSSFAEYQAKATEHLSALGEKAKPALEDLRQGLLPVLESLKLSFWSAVDEATKKLNTQ.

The signal sequence occupies residues 1–18 (MKAVVLTVAVLFLTGSQA). A run of 2 repeats spans residues 67-88 (LKLLDNWDSLSSTVSKVREQIG) and 89-110 (PVSQDFWDKLEKDTVSLRQEMN). Residues 67–264 (LKLLDNWDSL…DEATKKLNTQ (198 aa)) form a 10 X approximate tandem repeats region. Met109 is modified (methionine sulfoxide). The stretch at 111-121 (KDLEEVKRKVQ) is one 3; half-length repeat. Tandem repeats lie at residues 122–143 (PYLDEFQKRWQEDVERYRQQVE), 144–165 (PLSKELREGARQKLLELHEKLS), and 166–187 (PLGQEMRDRARTHVDALRTHLA). A 7; truncated repeat occupies 188-207 (PYSDELRQRLAARLEALKEG). Copy 8 of the repeat occupies 208–229 (SSFAEYQAKATEHLSALGEKAK). The stretch at 230–240 (PALEDLRQGLL) is one 9; half-length repeat. Repeat 10 spans residues 241 to 264 (PVLESLKLSFWSAVDEATKKLNTQ).

The protein belongs to the apolipoprotein A1/A4/E family. Homodimer. Interacts with APOA1BP and CLU. Component of a sperm activating protein complex (SPAP), consisting of APOA1, an immunoglobulin heavy chain, an immunoglobulin light chain and albumin. Interacts with NDRG1. Interacts with SCGB3A2. Interacts with NAXE and YJEFN3. Post-translationally, glycosylated. In terms of processing, palmitoylated. Phosphorylation sites are present in the extracellular medium.

It localises to the secreted. Functionally, participates in the reverse transport of cholesterol from tissues to the liver for excretion by promoting cholesterol efflux from tissues and by acting as a cofactor for the lecithin cholesterol acyltransferase (LCAT). As part of the SPAP complex, activates spermatozoa motility. The protein is Apolipoprotein A-I (APOA1) of Ictidomys tridecemlineatus (Thirteen-lined ground squirrel).